Here is a 482-residue protein sequence, read N- to C-terminus: FAD-linked oxidoreductase alt4 (482 aa).

Residues 53–211 (ERPTYLAIVD…LEATFQVYPQ (159 aa)) enclose the FAD-binding PCMH-type domain.

This sequence belongs to the oxygen-dependent FAD-linked oxidoreductase family. It depends on FAD as a cofactor.

It functions in the pathway secondary metabolite biosynthesis. In terms of biological role, FAD-linked oxidoreductase; part of the gene cluster that mediates the biosynthesis of alternapyrone derivatives. Alternapyrone is a decaketide with octa-methylation from methionine on every C2 unit except the third unit. All the domains in the polyketide synthase alt5 are apparently involved in alternapyrone synthesis, that is, the 8 CMeT, 7 KR, 7 DH, and 4 ER reactions in the 9 KS-mediated condensation steps required for alternapyrone synthesis. the alternapyrone produced by alt5 might be intensively modified by cytochrome P450 monooxygenases alt1, alt2 and alt3 and FAD-dependent oxidoreductase alt4 present in the alt gene cluster. This chain is FAD-linked oxidoreductase alt4, found in Alternaria solani.